Here is a 2797-residue protein sequence, read N- to C-terminus: Nonribosomal peptide synthetase penN (2797 aa).

The tract at residues 239–625 (SRPDHPAICA…ARKDSQVKIR (387 aa)) is adenylation 1. The Carrier 1 domain maps to 751 to 824 (TDTERHVHRF…DIVSLVRTAT (74 aa)). At Ser785 the chain carries O-(pantetheine 4'-phosphoryl)serine. The tract at residues 830-856 (PSAGAEISRSDAPTESPATGSFEGSGY) is disordered. Residues 870–1299 (QSFSQARMWF…DIEIGSLLLT (430 aa)) form a condensation 1 region. Residues 1328-1731 (FHQQVAAHGD…GRMDQQVKIR (404 aa)) are adenylation 2. Positions 1857–1953 (LEIGTGTGMI…VIKQLIQLHD (97 aa)) are methyltransferase. Positions 2277–2351 (SFTDDIERAM…RLAGRVRGFR (75 aa)) constitute a Carrier 2 domain. Ser2311 carries the post-translational modification O-(pantetheine 4'-phosphoryl)serine. A condensation 2 region spans residues 2516–2658 (YDGISLSSIL…VNRTLIRVQL (143 aa)).

Belongs to the NRP synthetase family.

It carries out the reaction O-methyl-L-tyrosine + anthranilate + S-adenosyl-L-methionine + 2 ATP = (-)-4'-methoxycyclopeptine + 2 AMP + S-adenosyl-L-homocysteine + 2 diphosphate + 2 H(+). The enzyme catalyses anthranilate + L-phenylalanine + S-adenosyl-L-methionine + 2 ATP = cyclopeptine + 2 AMP + S-adenosyl-L-homocysteine + 2 diphosphate + 2 H(+). The protein operates within secondary metabolite biosynthesis. Its pathway is alkaloid biosynthesis. It participates in mycotoxin biosynthesis. Functionally, nonribosomal peptide synthetase; part of the gene cluster that mediates the biosynthesis of penigequinolones, potent insecticidal alkaloids that contain a highly modified 10-carbon prenyl group. The first stage is catalyzed by the nonribosomal peptide synthetase penN that condenses anthranilic acid and O-methyl-L-tyrosine to produce 4'-methoxycyclopeptin. 4'-methoxycyclopeptin is then converted to 4'-methoxydehydrocyclopeptin by the ketoglutarate-dependent dioxygenase penM through dehydrogenation to form a double bond between C-alpha and C-beta of the O-methyltyrosine side chain. PenM also converts its first product methoxydehydrocyclopeptin to 4'-methoxycyclopenin. The following conversion of 4'methoxycyclopenin into 4'-methoxyviridicatin is catalyzed by the cyclopenase penL. 4'-methoxyviridicatin is the precursor of quinolone natural products, and is further converted to quinolinone B. The prenyltransferase penI then catalyzes the canonical Friedel-Crafts alkylation of quinolinone B with dimethylallyl cation to yield dimethylallyl quinolone, which is subjected to FAD-dependent dehydrogenation by the FAD-linked oxidoreductase penH to yield conjugated aryl diene. The delta(3') double bond then serves as the site of the second alkylation with DMAPP catalyzed by the prenyltransferase penG to yield a carbenium ion intermediate, which can be attacked by H(2)O to yield a styrenyl quinolone containing a C3'-hydroxyprenyl chain, or undergo cyclization to yield yaequinolones J1 and J2. The conversion of the styrenyl quinolone into the tetrahydrofuran-containing yaequinolone C is performed by the FAD-dependent monooxygenase penE and involves epoxidation of the terminal C7'-C8' olefin, followed by epoxide ring opening initiated by the C3' hydroxyl group. The predicted cysteine hydrolase penJ acts as an epoxide hydrolase that enhances the rate of the 5-exo-tet cyclization step, increasing the yield of yaequinolone C. PenF catalyzes the cationic rearrangement of the epoxide formed by penE (before ring opening to produce yaequinolone C) into yaequinolone D. Finally, the short-chain dehydrogenase/reductase (SDR)-like reductase penD, catalyzes both the dehydration of yaequinolone D and the reduction of the resulting oxonium to yield penigequinolone. The sequence is that of Nonribosomal peptide synthetase penN from Penicillium thymicola.